A 588-amino-acid polypeptide reads, in one-letter code: Endogenous retrovirus group K member 7 Env polyprotein (588 aa).

The tract at residues 355-375 is fusion peptide; the sequence is FIFTLIAVIMGLIAVTATAAV. The chain crosses the membrane as a helical span at residues 522–542; it reads IGSTTIINLILILVCLFCLLL.

The protein belongs to the beta type-B retroviral envelope protein family. HERV class-II K(HML-2) env subfamily. In terms of assembly, the surface (SU) and transmembrane (TM) proteins form a heterodimer. SU and TM are attached by noncovalent interactions or by a labile interchain disulfide bond. Specific enzymatic cleavages in vivo yield the mature SU and TM proteins. Expressed in lung, placenta, testis and peripheral blood lymphocytes.

Its subcellular location is the virion. The protein localises to the cell membrane. Functionally, retroviral envelope proteins mediate receptor recognition and membrane fusion during early infection. Endogenous envelope proteins may have kept, lost or modified their original function during evolution. Its function is as follows. SU mediates receptor recognition. In terms of biological role, TM anchors the envelope heterodimer to the viral membrane through one transmembrane domain. The other hydrophobic domain, called fusion peptide, mediates fusion of the viral membrane with the target cell membrane. The polypeptide is Endogenous retrovirus group K member 7 Env polyprotein (ERVK-7) (Homo sapiens (Human)).